The chain runs to 131 residues: Maturin (131 aa).

The residue at position 34 (Tyr34) is a Phosphotyrosine. The span at 107–120 (FEEYSADVEEEEPE) shows a compositional bias: acidic residues. The disordered stretch occupies residues 107 to 131 (FEEYSADVEEEEPEADHPQMGVSQQ).

The protein belongs to the MTURN family. Post-translationally, phosphorylation at Tyr-34 is essential for its ability to promote megakaryocyte differentiation.

It is found in the cytoplasm. Promotes megakaryocyte differentiation by enhancing ERK and JNK signaling as well as up-regulating RUNX1 and FLI1 expression. Represses NF-kappa-B transcriptional activity by inhibiting phosphorylation of RELA at 'Ser- 536'. May be involved in early neuronal development. This chain is Maturin (MTURN), found in Bos taurus (Bovine).